Reading from the N-terminus, the 419-residue chain is Creatine kinase S-type, mitochondrial (419 aa).

A mitochondrion-targeting transit peptide spans 1–39; it reads MASIFSKLLTGRNASLLFATMGTSVLTTGYLLNRQKVCA. Residues 40–64 form a cardiolipin-binding region; it reads EVREQPRLFPPSADYPDLRKHNNCM. Residues 46–132 enclose the Phosphagen kinase N-terminal domain; the sequence is RLFPPSADYP…FDPVIKLRHN (87 aa). The Phosphagen kinase C-terminal domain occupies 159-401; that stretch reads YVLSSRVRTG…NYLVDCEKKL (243 aa). ATP is bound by residues 162 to 166 and H225; that span reads SSRVR. Y255 carries the post-translational modification Phosphotyrosine. ATP is bound by residues R270, R326, 354-359, and D369; that span reads RGTGGV. Phosphothreonine is present on T356.

This sequence belongs to the ATP:guanido phosphotransferase family. As to quaternary structure, exists as an octamer composed of four CKMT2 homodimers. In terms of tissue distribution, sarcomere-specific. Found only in heart and skeletal muscles.

It is found in the mitochondrion inner membrane. It catalyses the reaction creatine + ATP = N-phosphocreatine + ADP + H(+). Its function is as follows. Reversibly catalyzes the transfer of phosphate between ATP and various phosphogens (e.g. creatine phosphate). Creatine kinase isoenzymes play a central role in energy transduction in tissues with large, fluctuating energy demands, such as skeletal muscle, heart, brain and spermatozoa. The polypeptide is Creatine kinase S-type, mitochondrial (CKMT2) (Homo sapiens (Human)).